Consider the following 273-residue polypeptide: Shikimate dehydrogenase (NADP(+)) (273 aa).

Residues 19-21 and Thr66 contribute to the shikimate site; that span reads SKS. Catalysis depends on Lys70, which acts as the Proton acceptor. 2 residues coordinate shikimate: Asn91 and Asp107. NADP(+)-binding positions include 131-135 and Met218; that span reads GAGGA. Position 220 (Tyr220) interacts with shikimate. Gly242 provides a ligand contact to NADP(+).

It belongs to the shikimate dehydrogenase family. Homodimer.

The catalysed reaction is shikimate + NADP(+) = 3-dehydroshikimate + NADPH + H(+). It participates in metabolic intermediate biosynthesis; chorismate biosynthesis; chorismate from D-erythrose 4-phosphate and phosphoenolpyruvate: step 4/7. Involved in the biosynthesis of the chorismate, which leads to the biosynthesis of aromatic amino acids. Catalyzes the reversible NADPH linked reduction of 3-dehydroshikimate (DHSA) to yield shikimate (SA). In Buchnera aphidicola subsp. Acyrthosiphon pisum (strain 5A), this protein is Shikimate dehydrogenase (NADP(+)).